The chain runs to 331 residues: Hydroxysteroid dehydrogenase-like protein 1 (331 aa).

The tract at residues 2–82 (AAVDRFNLLY…TGSTDGIGKA (81 aa)) is required for mitochondria translocation. NADP(+) contacts are provided by residues 74–80 (GSTDGIG) and aspartate 125. Serine 205 provides a ligand contact to substrate. Tyrosine 218 (proton acceptor) is an active-site residue. Lysine 222 serves as a coordination point for NADP(+).

Belongs to the short-chain dehydrogenases/reductases (SDR) family. 17-beta-HSD 3 subfamily.

Its subcellular location is the mitochondrion. In terms of biological role, may catalyze the metabolism of steroid hormones and thus play an important role in sex differentiation, the emergence and maintenance of the secondary sexual characters, and the regulation of endocrine. This chain is Hydroxysteroid dehydrogenase-like protein 1 (HSDL1), found in Gallus gallus (Chicken).